The chain runs to 398 residues: tRNA pseudouridine synthase D (398 aa).

The Nucleophile role is filled by Asp-76. Residues 151-360 (GVPNFFGEQR…MPGERRPLRI (210 aa)) enclose the TRUD domain.

Belongs to the pseudouridine synthase TruD family.

It catalyses the reaction uridine(13) in tRNA = pseudouridine(13) in tRNA. Responsible for synthesis of pseudouridine from uracil-13 in transfer RNAs. This is tRNA pseudouridine synthase D from Syntrophotalea carbinolica (strain DSM 2380 / NBRC 103641 / GraBd1) (Pelobacter carbinolicus).